The sequence spans 982 residues: Glycine dehydrogenase (decarboxylating) (982 aa).

An N6-(pyridoxal phosphate)lysine modification is found at Lys-721.

This sequence belongs to the GcvP family. The glycine cleavage system is composed of four proteins: P, T, L and H. It depends on pyridoxal 5'-phosphate as a cofactor.

It catalyses the reaction N(6)-[(R)-lipoyl]-L-lysyl-[glycine-cleavage complex H protein] + glycine + H(+) = N(6)-[(R)-S(8)-aminomethyldihydrolipoyl]-L-lysyl-[glycine-cleavage complex H protein] + CO2. Functionally, the glycine cleavage system catalyzes the degradation of glycine. The P protein binds the alpha-amino group of glycine through its pyridoxal phosphate cofactor; CO(2) is released and the remaining methylamine moiety is then transferred to the lipoamide cofactor of the H protein. The chain is Glycine dehydrogenase (decarboxylating) from Prochlorococcus marinus (strain MIT 9303).